The sequence spans 634 residues: MYDLLKTIDDPADLRRLDRRQLQPLADELRAFVLDSVSKTGGHLSSNLGTVELTIALHYVFNTPNDRIVWDVGHQTYPHKILTGRRDQMHSLRQQDGISGFPRRSESEYDTFGTAHSSTSISAALGMAIGSQLNGDDRFSIAVIGDGAMTAGMAFEAMNNAGVSEDAKVLVILNDNDMSISPPVGALNRHLARLMSGRFYAAARAGVERVLSVAPPVLELARKLEEHAKGMVVPATLFEEFGFNYIGPIDGHDLDSLIPTLQNIRELRGPQFLHVVTKKGQGYKLAEADPVLYHGPGKFNPAEGIKPSTTPAKKTYTQVFGEWLCDEAERDTRVVGITPAMREGSGMVEFEKRFKDRYYDVGIAEQHAVTFAGGMATEGLKPVVAIYSTFLQRAYDQLIHDVALQNLPVVFAIDRAGLVGADGATHAGAYDLAFMRCIPNMTIMAASDENECRQMLHTALQQPNPTAVRYPRGAGTGVPTVKEFTEIPLGKGEVRRQTSQPEGKRVAILAFGTMVAPSLAAAEELDATVANMRFVKPVDAALVRELAETHDYLVTVEEGCVMGGAGSACVEALMESGVIRPVLQLGLPDLFIDHGDPAKLLSQCGLDGAGIAKSIRERFLNPAADVAGQAKRVA.

Thiamine diphosphate is bound by residues His-74 and Ala-115–Ser-117. Asp-146 is a binding site for Mg(2+). Residues Gly-147 to Ala-148, Asn-176, Tyr-283, and Glu-365 each bind thiamine diphosphate. Asn-176 is a binding site for Mg(2+).

Belongs to the transketolase family. DXPS subfamily. In terms of assembly, homodimer. Mg(2+) is required as a cofactor. The cofactor is thiamine diphosphate.

It catalyses the reaction D-glyceraldehyde 3-phosphate + pyruvate + H(+) = 1-deoxy-D-xylulose 5-phosphate + CO2. It functions in the pathway metabolic intermediate biosynthesis; 1-deoxy-D-xylulose 5-phosphate biosynthesis; 1-deoxy-D-xylulose 5-phosphate from D-glyceraldehyde 3-phosphate and pyruvate: step 1/1. In terms of biological role, catalyzes the acyloin condensation reaction between C atoms 2 and 3 of pyruvate and glyceraldehyde 3-phosphate to yield 1-deoxy-D-xylulose-5-phosphate (DXP). The sequence is that of 1-deoxy-D-xylulose-5-phosphate synthase from Burkholderia lata (strain ATCC 17760 / DSM 23089 / LMG 22485 / NCIMB 9086 / R18194 / 383).